The sequence spans 95 residues: Secretoglobin family 2A member 1 (95 aa).

A signal peptide spans 1–18 (MKLVFLFLLVTIPICCYA). N-linked (GlcNAc...) asparagine glycosylation is found at N35 and N72.

The protein belongs to the secretoglobin family. Lipophilin subfamily. In terms of assembly, prostatein is composed of three different peptides called C1, C2 and C3. These form covalent C1:C3 (F) and C2:C3 (S) heterodimers whose non-covalent association forms tetrameric (C1:C3/C3:C2) prostatein molecules. In terms of tissue distribution, expressed at very low level in ventral prostate.

The protein resides in the secreted. In terms of biological role, part of prostatein which is the major secretory glycoprotein of ventral prostate gland. Steroid-binding protein; can bind non-polar steroids, cholesterol and a group of small proline-rich peptides. This is Secretoglobin family 2A member 1 from Rattus norvegicus (Rat).